Reading from the N-terminus, the 453-residue chain is Glutamate--tRNA ligase 2 (453 aa).

The 'HIGH' region signature appears at 10–20 (PSPTGFLHIGG). Positions 232 to 236 (KLSKR) match the 'KMSKS' region motif. Lys235 contributes to the ATP binding site.

It belongs to the class-I aminoacyl-tRNA synthetase family. Glutamate--tRNA ligase type 1 subfamily. As to quaternary structure, monomer.

The protein resides in the cytoplasm. The catalysed reaction is tRNA(Glu) + L-glutamate + ATP = L-glutamyl-tRNA(Glu) + AMP + diphosphate. Catalyzes the attachment of glutamate to tRNA(Glu) in a two-step reaction: glutamate is first activated by ATP to form Glu-AMP and then transferred to the acceptor end of tRNA(Glu). In Wolbachia sp. subsp. Brugia malayi (strain TRS), this protein is Glutamate--tRNA ligase 2.